A 291-amino-acid polypeptide reads, in one-letter code: MKKTNKRPDGRKFQKGGKPFRSDKGEGRGRMNNKKKGSVNAGLDRKVLVEPHPRFPGVYISRGKEDLLLTRNLVPGVSVYGEKRVAVDLEGMKVEYRVWNAYRSKLAAGIVCGAENIHMEPGSKVLYLGASSGTTVSHVSDIVGKDGVVYAVEFSERSGRDLINMSMKRPNIVPIIEDARYPSRYRMLVPIVDCIFSDVSQPDQTRIVALNAQYFLKEGGGVDVSIKANCVNSAVPAETVFADEVNILRKNSIRPKEQVTLEPFEKDHAMIIGRFKLSASEEKRQSSQKKD.

Basic and acidic residues-rich tracts occupy residues 1–12 and 20–29; these read MKKTNKRPDGRK and FRSDKGEGRG. Residues 1–45 form a disordered region; it reads MKKTNKRPDGRKFQKGGKPFRSDKGEGRGRMNNKKKGSVNAGLDR. An asymmetric dimethylarginine mark is found at R28 and R62. S-adenosyl-L-methionine contacts are provided by residues 134 to 135, 153 to 154, 178 to 179, and 198 to 201; these read TT, EF, DA, and DVSQ.

The protein belongs to the methyltransferase superfamily. Fibrillarin family. As to quaternary structure, component of box C/D small nucleolar ribonucleoprotein (snoRNP) particles.

The protein resides in the nucleus. It localises to the nucleolus. It carries out the reaction L-glutaminyl-[histone H2A] + S-adenosyl-L-methionine = N(5)-methyl-L-glutaminyl-[histone H2A] + S-adenosyl-L-homocysteine + H(+). Functionally, S-adenosyl-L-methionine-dependent methyltransferase that has the ability to methylate both RNAs and proteins. Involved in pre-rRNA processing. Utilizes the methyl donor S-adenosyl-L-methionine to catalyze the site-specific 2'-hydroxyl methylation of ribose moieties in pre-ribosomal RNA. Site specificity is provided by a guide RNA that base pairs with the substrate. Methylation occurs at a characteristic distance from the sequence involved in base pairing with the guide RNA. Also acts as a protein methyltransferase by mediating methylation of 'Gln-105' of histone H2A (H2AQ105me), a modification that impairs binding of the FACT complex and is specifically present at 35S ribosomal DNA locus. The protein is rRNA 2'-O-methyltransferase fibrillarin (NOP1) of Encephalitozoon cuniculi (strain GB-M1) (Microsporidian parasite).